The following is a 778-amino-acid chain: Phenylalanine--tRNA ligase beta subunit (778 aa).

The tRNA-binding domain occupies 39–150 (YEVPQKIVFG…GKYKIGEEVS (112 aa)). Residues 391–467 (HEDKIISLNK…RLVGIDNIPS (77 aa)) form the B5 domain. Mg(2+)-binding residues include aspartate 445, aspartate 451, glutamate 454, and glutamate 455. Residues 686–778 (SKYQASFRDL…LKNQLGVGIR (93 aa)) form the FDX-ACB domain.

Belongs to the phenylalanyl-tRNA synthetase beta subunit family. Type 1 subfamily. Tetramer of two alpha and two beta subunits. Mg(2+) serves as cofactor.

The protein localises to the cytoplasm. The catalysed reaction is tRNA(Phe) + L-phenylalanine + ATP = L-phenylalanyl-tRNA(Phe) + AMP + diphosphate + H(+). This Sulfurimonas denitrificans (strain ATCC 33889 / DSM 1251) (Thiomicrospira denitrificans (strain ATCC 33889 / DSM 1251)) protein is Phenylalanine--tRNA ligase beta subunit.